Consider the following 154-residue polypeptide: 6,7-dimethyl-8-ribityllumazine synthase (154 aa).

Residues Phe26, 60-62 (ALE), and 84-86 (CII) contribute to the 5-amino-6-(D-ribitylamino)uracil site. Residue 89-90 (ET) participates in (2S)-2-hydroxy-3-oxobutyl phosphate binding. Residue His92 is the Proton donor of the active site. A 5-amino-6-(D-ribitylamino)uracil-binding site is contributed by Asn117. Arg131 is a (2S)-2-hydroxy-3-oxobutyl phosphate binding site.

It belongs to the DMRL synthase family.

It carries out the reaction (2S)-2-hydroxy-3-oxobutyl phosphate + 5-amino-6-(D-ribitylamino)uracil = 6,7-dimethyl-8-(1-D-ribityl)lumazine + phosphate + 2 H2O + H(+). The protein operates within cofactor biosynthesis; riboflavin biosynthesis; riboflavin from 2-hydroxy-3-oxobutyl phosphate and 5-amino-6-(D-ribitylamino)uracil: step 1/2. Catalyzes the formation of 6,7-dimethyl-8-ribityllumazine by condensation of 5-amino-6-(D-ribitylamino)uracil with 3,4-dihydroxy-2-butanone 4-phosphate. This is the penultimate step in the biosynthesis of riboflavin. This chain is 6,7-dimethyl-8-ribityllumazine synthase, found in Leptothrix cholodnii (strain ATCC 51168 / LMG 8142 / SP-6) (Leptothrix discophora (strain SP-6)).